Here is a 977-residue protein sequence, read N- to C-terminus: MASTASYSPSPTSQWRTQKLPKRFNFYVIHNQEFGKLSQSSSLPTSSFPKTLKLPVIQMPINNNIQSQTTVCVSTDENLEELVNLQKIANGVLTKESNKRVFIQDPPWVSSLFMNSLFVRAKQVQGVRREFREIERRRRYAMLRRRQIKAETEAWEQMVEEYRELEREMCEKKLAPNLPYVKKLLLGWFEPLRQAIEKEQNAETTVKHRAAFAPHIDSLPADKMAVIVMHKLMGLLMMGGKEERCVQVVQAAVQIGMAVENEVRIHNFLEKTKKLQKHMTGAQSQEDMSRETMILRKRVKSLIKRNRVVEVRKLMKSEEPESWGRDTQAKLGCRLLELLTETAYVQPPVDQSADTPPDIRPAFRHVFRIATRDPGKSIVKKYGVIECDPLVVAGVDRTVKQMMIPYVPMLVPPKKWRGYDKGGYLFLPSYLMRTHGSRRQQDAVRSVPTKQMQQVYEALDTLGSTKWRVNKRILSVVESIWAGGGNIAGLVDRKDVPIPELHSDDIMEVKKWKWRVRKSKKINQELHSQRCDTELKLSVARKLKDEEGFYYPHNLDFRGRAYPMHPHLNHLSSDLCRGILEFAEGRPLGKSGLRWLKIHLASLYAGGIEKLCYDARLAFVENHIDDILDSANNPLNGNRWWLNAEDPFQCLAACINLSEALKSSSPHTVFSHLPIHQDGSCNGLQHYAALGRDSMEAAAVNLVAGDKPADVYTEIALRVDHIIRGDSIKDPATDPNALLAKLLIDQVDRKLVKQTVMTSVYGVTYVGAREQIKRRLEEKGLIDDDRLLFTASCYAAKVTLAALGELFQAARGTMTWLGDCAKVIASENQPVRWTTPLGLPVVQPYFKTQRHVIRTSLQVLALQREGDTVEVRKQRTAFPPNFVHSLDGSHMMMTAVACRDAGLQFAGVHDSFWTHACDVDQMNRILREKFVELYSMPILEDLLESFQNSYPALTFPPLPKRGDFDLVEVLESPYFFN.

Residues 1–72 constitute a chloroplast transit peptide; the sequence is MASTASYSPS…NNIQSQTTVC (72 aa). Residues D678, K753, and D910 contribute to the active site.

Belongs to the phage and mitochondrial RNA polymerase family.

The protein localises to the plastid. It is found in the chloroplast. It carries out the reaction RNA(n) + a ribonucleoside 5'-triphosphate = RNA(n+1) + diphosphate. Its function is as follows. DNA-dependent RNA polymerase catalyzes the transcription of DNA into RNA using the four ribonucleoside triphosphates as substrates. This Nicotiana tabacum (Common tobacco) protein is DNA-directed RNA polymerase 3A, chloroplastic (RPOT3-SYL).